The primary structure comprises 159 residues: Large ribosomal subunit protein uL10 (159 aa).

The protein belongs to the universal ribosomal protein uL10 family. Part of the ribosomal stalk of the 50S ribosomal subunit. The N-terminus interacts with L11 and the large rRNA to form the base of the stalk. The C-terminus forms an elongated spine to which L12 dimers bind in a sequential fashion forming a multimeric L10(L12)X complex.

Forms part of the ribosomal stalk, playing a central role in the interaction of the ribosome with GTP-bound translation factors. This is Large ribosomal subunit protein uL10 from Sulfurimonas denitrificans (strain ATCC 33889 / DSM 1251) (Thiomicrospira denitrificans (strain ATCC 33889 / DSM 1251)).